We begin with the raw amino-acid sequence, 245 residues long: UPF0246 protein CE1889 (245 aa).

The tract at residues 1-20 (MLILLPPSETKTPGGAGAPL) is disordered.

This sequence belongs to the UPF0246 family.

This Corynebacterium efficiens (strain DSM 44549 / YS-314 / AJ 12310 / JCM 11189 / NBRC 100395) protein is UPF0246 protein CE1889.